The sequence spans 95 residues: MLKSNNTSETAAHKVGDKTAKKVFFRRRKGCPLSVPNAPVIDYKNPELLIKFVSEGGRMLPSRITNVCAKKQRKLNNAIKIARILALLPFVFQAK.

The protein belongs to the bacterial ribosomal protein bS18 family. Part of the 30S ribosomal subunit. Forms a tight heterodimer with protein bS6.

Binds as a heterodimer with protein bS6 to the central domain of the 16S rRNA, where it helps stabilize the platform of the 30S subunit. The chain is Small ribosomal subunit protein bS18 from Rickettsia africae (strain ESF-5).